Reading from the N-terminus, the 480-residue chain is Mannose-1-phosphate guanylyltransferase ManC (480 aa).

This sequence belongs to the mannose-6-phosphate isomerase type 2 family.

The enzyme catalyses alpha-D-mannose 1-phosphate + GTP + H(+) = GDP-alpha-D-mannose + diphosphate. It participates in nucleotide-sugar biosynthesis; GDP-alpha-D-mannose biosynthesis; GDP-alpha-D-mannose from alpha-D-mannose 1-phosphate (GTP route): step 1/1. Its function is as follows. Involved in the biosynthesis of the capsular polysaccharide colanic acid. This chain is Mannose-1-phosphate guanylyltransferase ManC (manC), found in Salmonella typhimurium (strain LT2 / SGSC1412 / ATCC 700720).